The sequence spans 134 residues: Large ribosomal subunit protein bL20 (134 aa).

It belongs to the bacterial ribosomal protein bL20 family.

Functionally, binds directly to 23S ribosomal RNA and is necessary for the in vitro assembly process of the 50S ribosomal subunit. It is not involved in the protein synthesizing functions of that subunit. In Rhizobium leguminosarum bv. trifolii (strain WSM2304), this protein is Large ribosomal subunit protein bL20.